The chain runs to 734 residues: Photosystem I P700 chlorophyll a apoprotein A2 (734 aa).

8 consecutive transmembrane segments (helical) span residues 46 to 69 (IFASHFGQLAIIFLWTSGNLFHVA), 135 to 158 (LYTGALFLLFLSAISLIAGWLHLQ), 175 to 199 (LNHHLSGLFGVSSLAWTGHLVHVAI), 273 to 291 (IAHHHLAIAFIFLVAGHMY), 330 to 353 (IHFQLGLALASLGVITSLVAQHMY), 369 to 395 (AALYTHHQYIAGFIMTGAFAHGAIFFI), 417 to 439 (AIISHLSWASLFLGFHTLGLYVH), and 517 to 535 (FLVHHAIALGLHTTTLILV). Residues Cys559 and Cys568 each contribute to the [4Fe-4S] cluster site. The next 2 helical transmembrane spans lie at 575 to 596 (AFYLAVFWMLNTIGWVTFYWHW) and 643 to 665 (LSVWAWMFLFGHLVWATGFMFLI). Residues His654, Met662, and Tyr670 each contribute to the chlorophyll a site. Residue Trp671 participates in phylloquinone binding. A helical membrane pass occupies residues 707 to 727 (LVGLAHFSVGYIFTYAAFLIA).

The protein belongs to the PsaA/PsaB family. As to quaternary structure, the PsaA/B heterodimer binds the P700 chlorophyll special pair and subsequent electron acceptors. PSI consists of a core antenna complex that captures photons, and an electron transfer chain that converts photonic excitation into a charge separation. The eukaryotic PSI reaction center is composed of at least 11 subunits. P700 is a chlorophyll a/chlorophyll a' dimer, A0 is one or more chlorophyll a, A1 is one or both phylloquinones and FX is a shared 4Fe-4S iron-sulfur center. is required as a cofactor.

It is found in the plastid. Its subcellular location is the chloroplast thylakoid membrane. The catalysed reaction is reduced [plastocyanin] + hnu + oxidized [2Fe-2S]-[ferredoxin] = oxidized [plastocyanin] + reduced [2Fe-2S]-[ferredoxin]. In terms of biological role, psaA and PsaB bind P700, the primary electron donor of photosystem I (PSI), as well as the electron acceptors A0, A1 and FX. PSI is a plastocyanin-ferredoxin oxidoreductase, converting photonic excitation into a charge separation, which transfers an electron from the donor P700 chlorophyll pair to the spectroscopically characterized acceptors A0, A1, FX, FA and FB in turn. Oxidized P700 is reduced on the lumenal side of the thylakoid membrane by plastocyanin. The polypeptide is Photosystem I P700 chlorophyll a apoprotein A2 (Calycanthus floridus var. glaucus (Eastern sweetshrub)).